Reading from the N-terminus, the 1136-residue chain is Tyrosine-protein kinase receptor Tie-1 (1136 aa).

The first 23 residues, 1–23, serve as a signal peptide directing secretion; it reads MVWLEPPLLLPIFFLASHVGAAV. The Extracellular portion of the chain corresponds to 24-757; that stretch reads DLTLLADLRL…IHAAEEGLDQ (734 aa). Residues 43-106 form the Ig-like C2-type 1 domain; it reads CVSGEAGAGR…PSDLVGVFSC (64 aa). N-linked (GlcNAc...) asparagine glycosylation is found at asparagine 84 and asparagine 159. EGF-like domains are found at residues 212–254, 256–301, and 303–343; these read GCEA…TRCE, ACRE…SQCQ, and ACAP…MHCE. 3 cysteine pairs are disulfide-bonded: cysteine 226/cysteine 235, cysteine 229/cysteine 242, and cysteine 244/cysteine 253. 3 disulfide bridges follow: cysteine 317-cysteine 325, cysteine 319-cysteine 331, and cysteine 333-cysteine 342. The Ig-like C2-type 2 domain maps to 370 to 424; it reads CAAAGNPFPVRGSMELRKPDGTVLLSTKAIVEPDRTTAEFEVPRLALGDSGLWEC. Fibronectin type-III domains lie at 444–543, 546–640, and 644–737; these read PPVP…CPEP, KPWL…LPPS, and APRH…TLGN. Asparagine 501, asparagine 594, and asparagine 707 each carry an N-linked (GlcNAc...) asparagine glycan. A helical transmembrane segment spans residues 758–782; it reads QLVLAVVGSVSATCLTILAALLTLA. Over 783-1136 the chain is Cytoplasmic; the sequence is CIRKSCLHRR…AGIDATAEEA (354 aa). Residues 837–1116 enclose the Protein kinase domain; sequence ITFEDLIGEG…RMLEARKAYV (280 aa). Residues 843–851 and lysine 868 contribute to the ATP site; that span reads IGEGNFGQV. Aspartate 977 functions as the Proton acceptor in the catalytic mechanism. At tyrosine 1005 the chain carries Phosphotyrosine; by autocatalysis.

Belongs to the protein kinase superfamily. Tyr protein kinase family. Tie subfamily. Heterodimer with TEK/TIE2. Interacts with SVEP1 (via C-terminus). Phosphorylated on tyrosine residues in response to ANGPT1, most likely by TEK/TIE2. In terms of tissue distribution, specifically expressed in developing vascular endothelial cells.

It localises to the cell membrane. The catalysed reaction is L-tyrosyl-[protein] + ATP = O-phospho-L-tyrosyl-[protein] + ADP + H(+). Its function is as follows. Transmembrane tyrosine-protein kinase that may modulate TEK/TIE2 activity and contribute to the regulation of angiogenesis. The chain is Tyrosine-protein kinase receptor Tie-1 (TIE1) from Bos taurus (Bovine).